The sequence spans 840 residues: Protein translocase subunit SecA (840 aa).

ATP-binding positions include Gln87, 105–109, and Asp494; that span reads GEGKT. The disordered stretch occupies residues 791 to 840; sequence LRKEQEDQPMFFGPAEGAGQKPQTRKDRKVGRNDPCPCGSGKKYKKCCGK. 4 residues coordinate Zn(2+): Cys826, Cys828, Cys837, and Cys838.

The protein belongs to the SecA family. In terms of assembly, monomer and homodimer. Part of the essential Sec protein translocation apparatus which comprises SecA, SecYEG and auxiliary proteins SecDF-YajC and YidC. Requires Zn(2+) as cofactor.

The protein resides in the cell inner membrane. Its subcellular location is the cytoplasm. The enzyme catalyses ATP + H2O + cellular proteinSide 1 = ADP + phosphate + cellular proteinSide 2.. Its function is as follows. Part of the Sec protein translocase complex. Interacts with the SecYEG preprotein conducting channel. Has a central role in coupling the hydrolysis of ATP to the transfer of proteins into and across the cell membrane, serving as an ATP-driven molecular motor driving the stepwise translocation of polypeptide chains across the membrane. This Syntrophobacter fumaroxidans (strain DSM 10017 / MPOB) protein is Protein translocase subunit SecA.